A 601-amino-acid polypeptide reads, in one-letter code: Elongation factor 4 (601 aa).

The 183-residue stretch at 5–187 folds into the tr-type G domain; the sequence is IRKKNFCIIA…AICKYVPSPK (183 aa). GTP contacts are provided by residues 17–22 and 134–137; these read DHGKST and NKID.

Belongs to the TRAFAC class translation factor GTPase superfamily. Classic translation factor GTPase family. LepA subfamily.

It is found in the cell inner membrane. The catalysed reaction is GTP + H2O = GDP + phosphate + H(+). Its function is as follows. Required for accurate and efficient protein synthesis under certain stress conditions. May act as a fidelity factor of the translation reaction, by catalyzing a one-codon backward translocation of tRNAs on improperly translocated ribosomes. Back-translocation proceeds from a post-translocation (POST) complex to a pre-translocation (PRE) complex, thus giving elongation factor G a second chance to translocate the tRNAs correctly. Binds to ribosomes in a GTP-dependent manner. The polypeptide is Elongation factor 4 (Borreliella afzelii (strain PKo) (Borrelia afzelii)).